Here is a 206-residue protein sequence, read N- to C-terminus: Thymidylate kinase (206 aa).

11–18 (GIDGAGKT) provides a ligand contact to ATP.

It belongs to the thymidylate kinase family.

It carries out the reaction dTMP + ATP = dTDP + ADP. Its function is as follows. Phosphorylation of dTMP to form dTDP in both de novo and salvage pathways of dTTP synthesis. This Paraburkholderia phytofirmans (strain DSM 17436 / LMG 22146 / PsJN) (Burkholderia phytofirmans) protein is Thymidylate kinase.